Reading from the N-terminus, the 1295-residue chain is Protein glp-1 (1295 aa).

The signal sequence occupies residues 1–15; that stretch reads MRVLLILLAFFAPIA. Over 16–764 the chain is Extracellular; sequence SQLMGGECGR…NEIDEGWSRS (749 aa). 4 EGF-like domains span residues 19 to 58, 117 to 152, 154 to 190, and 190 to 230; these read MGGE…AFCE, GVNP…SYCE, GIDH…RYCE, and ERTE…EFCN. 37 disulfides stabilise this stretch: Cys23/Cys35, Cys29/Cys46, Cys48/Cys57, Cys121/Cys131, Cys126/Cys140, Cys142/Cys151, Cys158/Cys169, Cys163/Cys178, Cys180/Cys189, Cys201/Cys206, Cys220/Cys229, Cys236/Cys248, Cys242/Cys257, Cys259/Cys268, Cys275/Cys286, Cys280/Cys296, Cys298/Cys307, Cys329/Cys342, Cys336/Cys347, Cys349/Cys358, Cys373/Cys384, Cys378/Cys394, Cys396/Cys405, Cys411/Cys422, Cys416/Cys431, Cys433/Cys442, Cys450/Cys461, Cys455/Cys467, Cys469/Cys478, Cys496/Cys519, Cys501/Cys514, Cys510/Cys526, Cys536/Cys560, Cys542/Cys555, Cys551/Cys567, Cys582/Cys595, and Cys591/Cys607. One can recognise an EGF-like 5; calcium-binding domain in the interval 232-269; sequence DKNECLIEETCVNNSTCFNLHGDFTCTCKPGYAGKYCE. N-linked (GlcNAc...) asparagine glycans are attached at residues Asn244 and Asn245. EGF-like domains follow at residues 271 to 308, 316 to 359, 369 to 406, 407 to 443, and 446 to 479; these read AIDM…QRCE, GGIH…DRCE, DIQS…LNCE, QHLL…DYCE, and DRQL…PTCE. Asn333 is a glycosylation site (N-linked (GlcNAc...) asparagine). A glycan (N-linked (GlcNAc...) asparagine) is linked at Asn381. LNR repeat units follow at residues 496–532, 536–577, and 581–612; these read CEQR…GQRP, CQYP…CPAH, and HCIE…NGTE. 2 N-linked (GlcNAc...) asparagine glycosylation sites follow: Asn609 and Asn675. A helical transmembrane segment spans residues 765–786; it reads QVILFACIAFLAFGTVVAGVIA. Residues 787–1295 lie on the Cytoplasmic side of the membrane; sequence KNGPERSRKR…AEQMNGSFYC (509 aa). ANK repeat units lie at residues 961 to 990, 994 to 1023, 1030 to 1062, 1074 to 1103, and 1107 to 1136; these read DENT…NPTI, SERS…LLKE, NGMT…KLDY, KGRT…NKDK, and DGRT…SLGI. The interval 1177 to 1244 is disordered; it reads IVKSGHGAKS…TTSTPNRMET (68 aa). The span at 1201-1210 shows a compositional bias: polar residues; the sequence is KTPTSAASSR. A compositionally biased stretch (low complexity) spans 1221–1239; it reads DGSFSSPSPHYYPTTTSTP.

Interacts with sel-10. In terms of assembly, when activated, the glp-1/Notch intracellular domain (NICD) may become a component of a complex consisting of at least the NICD, lag-1 and lag-3. Upon binding its ligands, it is cleaved (S2 cleavage) in its extracellular domain, close to the transmembrane domain. S2 cleavage is probably mediated by the metalloproteases adm-4 and sup-17. It is then cleaved (S3 cleavage) downstream of its transmembrane domain, releasing it from the cell membrane; S3 cleavage requires a multiprotein gamma-secretase complex, which may include presenilin sel-12. As to expression, expressed in the distal mitotic region of the germ line. May be absent from the gonadal distal tip cell (DTC).

The protein resides in the cell membrane. It is found in the cell projection. Its subcellular location is the axon. It localises to the nucleus. Functionally, essential signaling protein which has a major role in germline and embryonic development; involved in cell fate decisions that require cell-cell interactions. Probable membrane-bound receptor for putative ligands lag-2 and apx-1. Upon ligand activation, and releasing from the cell membrane, the glp-1/Notch intracellular domain (NICD) probably forms a transcriptional activator complex with lag-1 and lag-3 and regulates expression of various genes; targets in the germline include lst-1 and sygl-1. Involved in the specification of the cell fates of the blastomeres, ABa and ABp. Proper signaling by glp-1 induces ABa descendants to produce anterior pharyngeal cells, and ABp descendants to adopt a different fate. Contributes to the establishment of the dorsal-ventral axis in early embryos. Required in postmitotic neurons in order to maintain the developmentally arrested larval state known as dauer, probably in response to lag-2. Regulates germ cell mitotic proliferation probably by regulating MAP kinase phosphatase lip-1 expression. Required for oocyte growth control. Plays a negative role in lifespan. This chain is Protein glp-1, found in Caenorhabditis elegans.